The following is a 1066-amino-acid chain: Ankyrin repeat protein nuc-2 (1066 aa).

Residues 1–166 (MKFGKQIQKR…KSKTKELYLS (166 aa)) form the SPX domain. ANK repeat units lie at residues 268–298 (RVTR…DIQS), 336–366 (YGRV…TINL), 370–399 (DNFT…RIDP), 403–432 (TDHV…KILA), 435–465 (EGLY…DLDQ), 470–499 (YGWT…DPNI), and 503–532 (KDLP…EKAA). A GP-PDE domain is found at 717-1048 (ITDFETYWKA…DPFPKLPKGV (332 aa)). The segment at 923–963 (KQQQQGSCSKGDGDEDMGGTTAASRREAADERTLQSDGRRT) is disordered. Basic and acidic residues predominate over residues 946–962 (SRREAADERTLQSDGRR).

Controls phosphorus acquisition. The sequence is that of Ankyrin repeat protein nuc-2 (nuc-2) from Neurospora crassa (strain ATCC 24698 / 74-OR23-1A / CBS 708.71 / DSM 1257 / FGSC 987).